The primary structure comprises 885 residues: MTTLSPEAFAGHTPMMQQYLRIKADHPDTLVFYRMGDFYELFFEDAEKAARLLDLTLTQRGASAGTPIKMAGVPHHAVEQYLAKLVKMGESVAICEQIGDPATSKGPVERKVVRVVTPGTLTDAALLSDKNDVYLLAMCTGHNKRGVAVNIGLAWLNLASGALRLAEIESEQLAAALERIRPAEILTPDGATDAIPAGAGASKRVPAWHFDIASGTQRLCDQLDVASLDGFGAHSLTSACGAAGALLLYAAATQGQQLRHVRSLKVENETEYIGLDPATRRNLELTETLRGTESPTLYSLLDTCCTTMGSRLLRHWLHHPPRASVAAQSRQQAIGALLDAPANASLDALRSALRQIADVERITGRLALLSARPRDLSSLRDTFAALPALRERISAIVANADALARVDAALAPPAECLDLLTSAIATEPAAMVRDGGVIARGYDAELDELRDISENCGQFLIDLEARERARTGIANLRVEYNKVHGFYIEVTRGQTDKVPDDYRRRQTLKNAERYITPELKTFEDKALSAQERALARERALYDSVLQALLPFIPECQRVASALAELDLLAAFAERARALDWVAPTFTDEIGIEIEQGRHPVVEAQVEQFIANDCRFGPERKLLLITGPNMGGKSTFMRQTALIALMAYVGSYVPAKSACFGPIDRIFTRIGAADDLAGGRSTFMVEMTEAAAILNDATPQSLVLMDEIGRGTSTFDGLALAWAIARHLLAHNACYTLFATHYFELTQLPAEFPQAANVHLSAVEHGHGIVFLHAVNEGPANQSYGLQVAQLAGVPAPVIRAARKHLAYLEQQSASQHTPQLDLFSAPPAAIDDLECADAPALPDTPHPALEKLRDIDPDDLKPREALDLLYELRTLVRSHDADGHA.

An ATP-binding site is contributed by glycine 626–serine 633.

The protein belongs to the DNA mismatch repair MutS family.

Functionally, this protein is involved in the repair of mismatches in DNA. It is possible that it carries out the mismatch recognition step. This protein has a weak ATPase activity. The sequence is that of DNA mismatch repair protein MutS from Burkholderia cenocepacia (strain ATCC BAA-245 / DSM 16553 / LMG 16656 / NCTC 13227 / J2315 / CF5610) (Burkholderia cepacia (strain J2315)).